The primary structure comprises 221 residues: Iron-sulfur cluster repair protein YtfE (221 aa).

The protein belongs to the RIC family. YtfE subfamily. As to quaternary structure, homodimer.

The protein localises to the cytoplasm. Functionally, di-iron-containing protein involved in the repair of iron-sulfur clusters damaged by oxidative and nitrosative stress conditions. This chain is Iron-sulfur cluster repair protein YtfE, found in Edwardsiella ictaluri (strain 93-146).